Consider the following 96-residue polypeptide: Co-chaperonin GroES (96 aa).

It belongs to the GroES chaperonin family. Heptamer of 7 subunits arranged in a ring. Interacts with the chaperonin GroEL.

It localises to the cytoplasm. Together with the chaperonin GroEL, plays an essential role in assisting protein folding. The GroEL-GroES system forms a nano-cage that allows encapsulation of the non-native substrate proteins and provides a physical environment optimized to promote and accelerate protein folding. GroES binds to the apical surface of the GroEL ring, thereby capping the opening of the GroEL channel. This Shewanella pealeana (strain ATCC 700345 / ANG-SQ1) protein is Co-chaperonin GroES.